The primary structure comprises 209 residues: Thiamine-phosphate synthase (209 aa).

Residues 36–40 (QYRDK) and N68 contribute to the 4-amino-2-methyl-5-(diphosphooxymethyl)pyrimidine site. Positions 69 and 87 each coordinate Mg(2+). T106 lines the 4-amino-2-methyl-5-(diphosphooxymethyl)pyrimidine pocket. 2-[(2R,5Z)-2-carboxy-4-methylthiazol-5(2H)-ylidene]ethyl phosphate is bound at residue 133–135 (SST). K136 contacts 4-amino-2-methyl-5-(diphosphooxymethyl)pyrimidine. G163 provides a ligand contact to 2-[(2R,5Z)-2-carboxy-4-methylthiazol-5(2H)-ylidene]ethyl phosphate.

Belongs to the thiamine-phosphate synthase family. Requires Mg(2+) as cofactor.

The catalysed reaction is 2-[(2R,5Z)-2-carboxy-4-methylthiazol-5(2H)-ylidene]ethyl phosphate + 4-amino-2-methyl-5-(diphosphooxymethyl)pyrimidine + 2 H(+) = thiamine phosphate + CO2 + diphosphate. The enzyme catalyses 2-(2-carboxy-4-methylthiazol-5-yl)ethyl phosphate + 4-amino-2-methyl-5-(diphosphooxymethyl)pyrimidine + 2 H(+) = thiamine phosphate + CO2 + diphosphate. It carries out the reaction 4-methyl-5-(2-phosphooxyethyl)-thiazole + 4-amino-2-methyl-5-(diphosphooxymethyl)pyrimidine + H(+) = thiamine phosphate + diphosphate. Its pathway is cofactor biosynthesis; thiamine diphosphate biosynthesis; thiamine phosphate from 4-amino-2-methyl-5-diphosphomethylpyrimidine and 4-methyl-5-(2-phosphoethyl)-thiazole: step 1/1. In terms of biological role, condenses 4-methyl-5-(beta-hydroxyethyl)thiazole monophosphate (THZ-P) and 2-methyl-4-amino-5-hydroxymethyl pyrimidine pyrophosphate (HMP-PP) to form thiamine monophosphate (TMP). The sequence is that of Thiamine-phosphate synthase from Pseudomonas paraeruginosa (strain DSM 24068 / PA7) (Pseudomonas aeruginosa (strain PA7)).